Consider the following 152-residue polypeptide: MENDQEKPSMVAIQRLDPELPLPVRKHRGDAGADLFSAESVTIEPGHRILVGTGIAIALPIGTVGLIHPRSGRALKEGLSIVNTPGTIDADYRGEIKVCLINLDPTTPIRIERGERIAQLLVQKVELVDFCEVETLSETERGVNGYGSTGVN.

Substrate is bound by residues arginine 70–glycine 72, asparagine 83, threonine 87–aspartate 89, and lysine 97.

The protein belongs to the dUTPase family. The cofactor is Mg(2+).

The enzyme catalyses dUTP + H2O = dUMP + diphosphate + H(+). Its pathway is pyrimidine metabolism; dUMP biosynthesis; dUMP from dCTP (dUTP route): step 2/2. Its function is as follows. This enzyme is involved in nucleotide metabolism: it produces dUMP, the immediate precursor of thymidine nucleotides and it decreases the intracellular concentration of dUTP so that uracil cannot be incorporated into DNA. The chain is Deoxyuridine 5'-triphosphate nucleotidohydrolase from Corynebacterium diphtheriae (strain ATCC 700971 / NCTC 13129 / Biotype gravis).